We begin with the raw amino-acid sequence, 1040 residues long: BEM1-interacting protein 2 (1040 aa).

The disordered stretch occupies residues 1–39 (MSNDREVPTLSQLNTTVSRDKDVSDTLSPDFDSKGSATG). A compositionally biased stretch (polar residues) spans 8–17 (PTLSQLNTTV). Serine 18, serine 24, and serine 28 each carry phosphoserine. One can recognise an SH3 domain in the interval 43–107 (GNFPMYIAIN…PVVFTQKITV (65 aa)). The region spanning 266–330 (WSPEEITAYF…FKEIEKIKEA (65 aa)) is the SAM domain. 3 disordered regions span residues 365–412 (YRGH…SQEA), 437–478 (VSPR…WQSP), and 491–744 (IDQY…ARPV). The span at 372 to 397 (TSQSLEDLPSQQNFIPTPRNTRNSSA) shows a compositional bias: polar residues. The span at 444-457 (KPPSYPSPAQPPKS) shows a compositional bias: pro residues. Serine 450 carries the post-translational modification Phosphoserine. Residues 459–478 (LLNNTRTSPSPAQLYSWQSP) show a composition bias toward polar residues. Low complexity predominate over residues 495–505 (SSSDSNFNSRS). 3 positions are modified to phosphoserine: serine 519, serine 523, and serine 546. Over residues 557–570 (SSDRKSSCSSHEEE) the composition is skewed to basic and acidic residues. Positions 573-598 (QETMNTFERPTSSIYADGSTIASISN) are enriched in polar residues. Residues 600 to 609 (KLAHEKEGKK) are compositionally biased toward basic and acidic residues. Positions 632-648 (LKRSSSASRTSSFKKSS) are enriched in low complexity. Position 652 is a phosphoserine (serine 652). The segment covering 654-684 (FRQQFTDNAARSSSPEENPITSMPSEKNSSP) has biased composition (polar residues). Residues 690–701 (SSKKSRSKRRSV) show a composition bias toward basic residues. A compositionally biased stretch (basic and acidic residues) spans 702–732 (SAKEAEIFTETVKDDKNKRSASEAIKGETLK). Positions 768 to 887 (DADFSGWMSK…WMAALIKTTI (120 aa)) constitute a PH domain. Over residues 943 to 957 (QLQQQQHDNNQGQAD) the composition is skewed to low complexity. 2 disordered regions span residues 943 to 986 (QLQQ…NNTT) and 1007 to 1040 (VARN…TDKI). Residues 973-986 (TISTPNLSSANNTT) show a composition bias toward polar residues. A compositionally biased stretch (basic and acidic residues) spans 1015–1024 (GTEKKGKFST).

As to quaternary structure, interacts with BEM1. Interacts with TOS7.

The protein resides in the bud. It is found in the bud neck. Functionally, protein involved in bud formation. Functions redundantly with BOI1 to promote the fusion of secretory vesicles with the plasma membrane at sites of polarized growth. Acts as an abscission inhibitor during cytokinesis in response to chromatin bridges. The protein is BEM1-interacting protein 2 of Saccharomyces cerevisiae (strain ATCC 204508 / S288c) (Baker's yeast).